A 372-amino-acid polypeptide reads, in one-letter code: Queuine tRNA-ribosyltransferase (372 aa).

D89 functions as the Proton acceptor in the catalytic mechanism. Residues 89–93 (DSGGF), D161, and G232 contribute to the substrate site. Positions 262 to 268 (GIGDLPS) are RNA binding. Residue D281 is the Nucleophile of the active site. Residues 286–290 (TKAAR) form an RNA binding; important for wobble base 34 recognition region. Positions 319, 321, 324, and 351 each coordinate Zn(2+).

Belongs to the queuine tRNA-ribosyltransferase family. Homodimer. Within each dimer, one monomer is responsible for RNA recognition and catalysis, while the other monomer binds to the replacement base PreQ1. It depends on Zn(2+) as a cofactor.

The enzyme catalyses 7-aminomethyl-7-carbaguanine + guanosine(34) in tRNA = 7-aminomethyl-7-carbaguanosine(34) in tRNA + guanine. It functions in the pathway tRNA modification; tRNA-queuosine biosynthesis. In terms of biological role, catalyzes the base-exchange of a guanine (G) residue with the queuine precursor 7-aminomethyl-7-deazaguanine (PreQ1) at position 34 (anticodon wobble position) in tRNAs with GU(N) anticodons (tRNA-Asp, -Asn, -His and -Tyr). Catalysis occurs through a double-displacement mechanism. The nucleophile active site attacks the C1' of nucleotide 34 to detach the guanine base from the RNA, forming a covalent enzyme-RNA intermediate. The proton acceptor active site deprotonates the incoming PreQ1, allowing a nucleophilic attack on the C1' of the ribose to form the product. After dissociation, two additional enzymatic reactions on the tRNA convert PreQ1 to queuine (Q), resulting in the hypermodified nucleoside queuosine (7-(((4,5-cis-dihydroxy-2-cyclopenten-1-yl)amino)methyl)-7-deazaguanosine). This is Queuine tRNA-ribosyltransferase from Chlamydia trachomatis serovar A (strain ATCC VR-571B / DSM 19440 / HAR-13).